The chain runs to 125 residues: MSIRTERVAELIQRELSGIFEKELPRSGVLTTIVGVKITPDLSIARVYVSILGSKEMGASVMAHIQKENKHFRKLLSSKIRHQFKRMPSLEFYQDDLFDQAAHINELIRKANEASSPTPKPDDEA.

Belongs to the RbfA family. As to quaternary structure, monomer. Binds 30S ribosomal subunits, but not 50S ribosomal subunits or 70S ribosomes.

It is found in the cytoplasm. One of several proteins that assist in the late maturation steps of the functional core of the 30S ribosomal subunit. Associates with free 30S ribosomal subunits (but not with 30S subunits that are part of 70S ribosomes or polysomes). Required for efficient processing of 16S rRNA. May interact with the 5'-terminal helix region of 16S rRNA. This Chloroherpeton thalassium (strain ATCC 35110 / GB-78) protein is Ribosome-binding factor A.